Here is a 68-residue protein sequence, read N- to C-terminus: uncharacterized protein (68 aa).

The interval 1-42 is disordered; that stretch reads MHLCQNGHYYKPHRASAEKVPYLKKKKKNSRNEGKAKKKNEK.

This is an uncharacterized protein from Saccharomyces cerevisiae (strain ATCC 204508 / S288c) (Baker's yeast).